Consider the following 474-residue polypeptide: MSEFSELVRILPLDQVAEIKRILSRGDPIPLQRLASLLTMVILTVNMSKKRKSSPIKLSTFTKYRRNVAKSLYYDMSSKTVFFEYHLKNTQDLQEGLEQAIAPYNFVVKVHKKPIDWQKQLSSVHERKAGHRSILSNNVGAEISKLAETKDSTWSFIERTMDLIEARTRQPTTRVAYRFLLQLTFMNCCRANDLKNADPSTFQIIADPHLGRILRAFVPETKTSIERFIYFFPCKGRCDPLLALDSYLLWVGPVPKTQTTDEETQYDYQLLQDTLLISYDRFIAKESKENIFKIPNGPKAHLGRHLMASYLGNNSLKSEATLYGNWSVERQEGVSKMADSRYMHTVKKSPPSYLFAFLSGYYKKSNQGEYVLAETLYNPLDYDKTLPITTNEKLICRRYGKNAKVIPKDALLYLYTYAQQKRKQLADPNEQNRLFSSESPAHPFLTPQSTGSSTPLTWTAPKTLSTGLMTPGEE.

Residues 135-421 form the Tyr recombinase Flp-type domain; it reads LSNNVGAEIS…LYLYTYAQQK (287 aa). Tyr342 serves as the catalytic O-(3'-phospho-DNA)-tyrosine intermediate. Positions 426–474 are disordered; that stretch reads ADPNEQNRLFSSESPAHPFLTPQSTGSSTPLTWTAPKTLSTGLMTPGEE. Polar residues-rich tracts occupy residues 429-439 and 446-468; these read NEQNRLFSSES and TPQSTGSSTPLTWTAPKTLSTGL.

It belongs to the 'phage' integrase family.

Catalyzes the recombination between the large inverted repetitions of the plasmid. In Zygosaccharomyces bailii, this protein is Recombinase Flp protein.